The chain runs to 204 residues: Thymidylate kinase (204 aa).

11 to 18 (GLDKSGKT) serves as a coordination point for ATP.

This sequence belongs to the thymidylate kinase family.

The catalysed reaction is dTMP + ATP = dTDP + ADP. The protein operates within pyrimidine metabolism; dTTP biosynthesis. This Cowpox virus (strain GRI-90 / Grishak) (CPV) protein is Thymidylate kinase (TMK).